Consider the following 327-residue polypeptide: GMP reductase (327 aa).

The Thioimidate intermediate role is filled by Cys-176. 205 to 228 contributes to the NADP(+) binding site; it reads IIADGGIRTHGDIAKSIRFGATMV.

The protein belongs to the IMPDH/GMPR family. GuaC type 2 subfamily.

The enzyme catalyses IMP + NH4(+) + NADP(+) = GMP + NADPH + 2 H(+). Functionally, catalyzes the irreversible NADPH-dependent deamination of GMP to IMP. It functions in the conversion of nucleobase, nucleoside and nucleotide derivatives of G to A nucleotides, and in maintaining the intracellular balance of A and G nucleotides. This is GMP reductase from Streptococcus equi subsp. zooepidemicus (strain H70).